Consider the following 156-residue polypeptide: Small ribosomal subunit protein uS7c (156 aa).

It belongs to the universal ribosomal protein uS7 family. As to quaternary structure, part of the 30S ribosomal subunit.

Its subcellular location is the plastid. Functionally, one of the primary rRNA binding proteins, it binds directly to 16S rRNA where it nucleates assembly of the head domain of the 30S subunit. The protein is Small ribosomal subunit protein uS7c (rps7) of Prototheca wickerhamii.